Reading from the N-terminus, the 209-residue chain is Casparian strip membrane protein 1 (209 aa).

Over 1-46 the chain is Cytoplasmic; that stretch reads MSSGANATTIDVPETRAEAKGKAPLIAAPIVATTKATPHPNAGWKK. A helical membrane pass occupies residues 47–67; that stretch reads GLAIFDFLLRLAAIAATLAAA. Residues 68–95 are Extracellular-facing; it reads TTMGTTDETLPFFTQFFQFQASFDDLPA. A helical transmembrane segment spans residues 96–116; that stretch reads FMFFVVATAIASGYLALSLPF. Over 117–137 the chain is Cytoplasmic; that stretch reads SLVSIFRPHAQGIRLLLIISD. A helical transmembrane segment spans residues 138–158; sequence TVMLALTTAGAASATAIVYLA. At 159-183 the chain is on the extracellular side; sequence HNGDSSANWIAICQQFTDFCQSVSG. The helical transmembrane segment at 184 to 204 threads the bilayer; that stretch reads AVVASFIAVVIFMLLVMMSAL. The Cytoplasmic portion of the chain corresponds to 205-209; that stretch reads ALRKH.

It belongs to the Casparian strip membrane proteins (CASP) family. Homodimer and heterodimers.

It is found in the cell membrane. Its function is as follows. Regulates membrane-cell wall junctions and localized cell wall deposition. Required for establishment of the Casparian strip membrane domain (CSD) and the subsequent formation of Casparian strips, a cell wall modification of the root endodermis that determines an apoplastic barrier between the intraorganismal apoplasm and the extraorganismal apoplasm and prevents lateral diffusion. The sequence is that of Casparian strip membrane protein 1 from Vitis vinifera (Grape).